A 753-amino-acid chain; its full sequence is Neuroendocrine convertase 1 (753 aa).

A signal peptide spans 1-27; that stretch reads MEQRGWTLQCTAFAFFCVWCALSSVKA. Positions 28 to 110 are excised as a propeptide; it reads KRQFVNEWAA…QQYEKERSKR (83 aa). A Peptidase S8 domain is found at 129-450; it reads QWYLQDTRMT…FGLLNAKALV (322 aa). Active-site charge relay system residues include Asp-167 and His-208. Intrachain disulfides connect Cys-225–Cys-374 and Cys-317–Cys-347. The active-site Charge relay system is Ser-382. Asn-401 is a glycosylation site (N-linked (GlcNAc...) asparagine). Positions 460-597 constitute a P/Homo B domain; that stretch reads NVPEKKECVV…KLILHGTSSQ (138 aa). Residues Cys-467 and Cys-494 are joined by a disulfide bond. Over residues 633-651 the composition is skewed to polar residues; it reads QKSLNGNLLVPKNSSSSNV. The disordered stretch occupies residues 633–663; sequence QKSLNGNLLVPKNSSSSNVEGRRDEQVQGTP. The N-linked (GlcNAc...) asparagine glycan is linked to Asn-645.

The protein belongs to the peptidase S8 family. Furin subfamily. Ca(2+) is required as a cofactor.

It localises to the cytoplasmic vesicle. Its subcellular location is the secretory vesicle. The enzyme catalyses Release of protein hormones, neuropeptides and renin from their precursors, generally by hydrolysis of -Lys-Arg-|- bonds.. Involved in the processing of hormone and other protein precursors at sites comprised of pairs of basic amino acid residues. Substrates include POMC, renin, enkephalin, dynorphin, somatostatin, insulin and AGRP. The sequence is that of Neuroendocrine convertase 1 (Pcsk1) from Mus cookii (Cook's mouse).